An 835-amino-acid chain; its full sequence is Lon protease (835 aa).

Residues 4–224 (LPYIAIRNQL…LAINMLINAI (221 aa)) enclose the Lon N-terminal domain. An ATP-binding site is contributed by 412 to 419 (GPPGTGKT). The region spanning 649-832 (QPKAGVVNAL…DEIFKYIFEA (184 aa)) is the Lon proteolytic domain. Residues S738 and K781 contribute to the active site.

Belongs to the peptidase S16 family. In terms of assembly, homohexamer. Organized in a ring with a central cavity.

It is found in the cytoplasm. The enzyme catalyses Hydrolysis of proteins in presence of ATP.. ATP-dependent serine protease that mediates the selective degradation of mutant and abnormal proteins as well as certain short-lived regulatory proteins. Required for cellular homeostasis and for survival from DNA damage and developmental changes induced by stress. Degrades polypeptides processively to yield small peptide fragments that are 5 to 10 amino acids long. Binds to DNA in a double-stranded, site-specific manner. The sequence is that of Lon protease from Metamycoplasma arthritidis (strain 158L3-1) (Mycoplasma arthritidis).